Reading from the N-terminus, the 344-residue chain is Deoxyhypusine hydroxylase (344 aa).

2 HEAT-like PBS-type repeats span residues 81–107 and 115–140; these read LKHELAYCLGQTANGAAIPYLTAVLED and RHEAAEALGALGDVASLGVLKRFRDR. Residues His-83, Glu-84, His-116, and Glu-117 each coordinate Fe cation. Residues 169 to 188 are disordered; sequence EKLRASDFSSVDPAPPTAQG. HEAT-like PBS-type repeat units lie at residues 210 to 240, 248 to 274, and 281 to 308; these read KRYRAMFALRDLASPPDLPTAVPAVLALAKG, FRHEIAFVFGQLAHPASIPALTEALSN, and VRHEAAEALGSLGDEEGVEETLRKFLHD. Fe cation is bound by residues His-250, Glu-251, His-283, and Glu-284.

It belongs to the deoxyhypusine hydroxylase family. Fe(2+) is required as a cofactor.

It localises to the cytoplasm. The protein localises to the nucleus. It catalyses the reaction [eIF5A protein]-deoxyhypusine + AH2 + O2 = [eIF5A protein]-hypusine + A + H2O. The protein operates within protein modification; eIF5A hypusination. Functionally, catalyzes the hydroxylation of the N(6)-(4-aminobutyl)-L-lysine intermediate to form hypusine, an essential post-translational modification only found in mature eIF-5A factor. The polypeptide is Deoxyhypusine hydroxylase (Chaetomium globosum (strain ATCC 6205 / CBS 148.51 / DSM 1962 / NBRC 6347 / NRRL 1970) (Soil fungus)).